The primary structure comprises 325 residues: Electron transfer flavoprotein subunit alpha (325 aa).

Position 262-290 (262-290) interacts with FAD; that stretch reads LYIACGISGAIQHLAGMSNSKVIVAINKD.

The protein belongs to the ETF alpha-subunit/FixB family. In terms of assembly, heterodimer of an alpha and a beta subunit. FAD is required as a cofactor.

Functionally, the electron transfer flavoprotein serves as a specific electron acceptor for other dehydrogenases. It transfers the electrons to the main respiratory chain via ETF-ubiquinone oxidoreductase (ETF dehydrogenase). The sequence is that of Electron transfer flavoprotein subunit alpha (etfA) from Bacillus subtilis (strain 168).